Here is a 242-residue protein sequence, read N- to C-terminus: Dihydropteridine reductase (242 aa).

12-36 contributes to the NADP(+) binding site; it reads LVYGGRGALGSRCVQAFRARNWWVA. 4 positions are modified to N6-succinyllysine: Lys71, Lys77, Lys94, and Lys100. The Proton acceptor role is filled by Tyr148.

This sequence belongs to the short-chain dehydrogenases/reductases (SDR) family. Homodimer.

The enzyme catalyses 5,6,7,8-tetrahydropteridine + NAD(+) = 6,7-dihydropteridine + NADH + H(+). It catalyses the reaction 5,6,7,8-tetrahydropteridine + NADP(+) = 6,7-dihydropteridine + NADPH + H(+). In terms of biological role, catalyzes the conversion of quinonoid dihydrobiopterin into tetrahydrobiopterin. The polypeptide is Dihydropteridine reductase (QDPR) (Bos taurus (Bovine)).